The chain runs to 239 residues: Putative GEM-like protein 3 (239 aa).

The disordered stretch occupies residues 29-68; it reads HWNPELVSESPAPDEKALSSSSAARSNPYVARAPTETSDA. One can recognise a GRAM domain in the interval 128-191; it reads KIFRQTFETV…HQLKSVNPSI (64 aa).

This sequence belongs to the GEM family.

This is Putative GEM-like protein 3 from Arabidopsis thaliana (Mouse-ear cress).